A 240-amino-acid chain; its full sequence is MGQKIHPVGFRLGITKEHKSRWFADKYHYPELLQEDRKIRQYVEKNLSNAGISDIRIERKADQVDIEIHTARPGVVVGRGGSGIEALRVGLQNALGGHRQIRINVVEVARVDADATLIAEYIAQQLERRVSFRRVVRQAIQRAQRAEVKGIKVQVSGRLNGAEIARTEWIREGRVPLHTLRADIDFAYRTAKTIYGILGVKIWVFKGEIIPGQEEQAPAQPATTPKRQRRRQQFEDRSNE.

One can recognise a KH type-2 domain in the interval 39–109 (IRQYVEKNLS…QIRINVVEVA (71 aa)). Residues 214-240 (EEQAPAQPATTPKRQRRRQQFEDRSNE) are disordered.

Belongs to the universal ribosomal protein uS3 family. As to quaternary structure, part of the 30S ribosomal subunit. Forms a tight complex with proteins S10 and S14.

Binds the lower part of the 30S subunit head. Binds mRNA in the 70S ribosome, positioning it for translation. This chain is Small ribosomal subunit protein uS3, found in Gloeothece citriformis (strain PCC 7424) (Cyanothece sp. (strain PCC 7424)).